The chain runs to 100 residues: ATP-dependent Clp protease adapter protein ClpS (100 aa).

The protein belongs to the ClpS family. Binds to the N-terminal domain of the chaperone ClpA.

Functionally, involved in the modulation of the specificity of the ClpAP-mediated ATP-dependent protein degradation. The chain is ATP-dependent Clp protease adapter protein ClpS from Corynebacterium glutamicum (strain R).